Consider the following 299-residue polypeptide: uncharacterized protein (299 aa).

6 helical membrane-spanning segments follow: residues 32 to 52, 56 to 76, 199 to 219, 220 to 240, 246 to 266, and 273 to 293; these read FILL…YLHL, SMII…SILY, LAIG…LLGA, YLIA…VKPE, FEIV…PIFG, and FLIS…ILKF.

Its subcellular location is the cell membrane. This is an uncharacterized protein from Methanocaldococcus jannaschii (strain ATCC 43067 / DSM 2661 / JAL-1 / JCM 10045 / NBRC 100440) (Methanococcus jannaschii).